The following is a 624-amino-acid chain: MPKLRSATSTEGRNMAGARALWRATGVKDNDFGKPIIAIANSFTQFVPGHVHLKDMGSLVASAIEEAGGIAKEFNTIAVDDGIAMGHGGMLYSLPSRELIADSVEYMVNAHCADALVCISNCDKITPGMLMAALRLNIPVVFVSGGPMEAGKTKLSDKLIKLDLVDAMVAGADSNVSDEDSAKIERSACPTCGSCSGMFTANSMNCLTEALGLSLPGNGSMLATHADRRELFLEAGRRVMALAKRYYHQDDESALPRNIANFKAFENAMTLDIAMGGSSNTVLHLLAAAQEADVDFTMADIDRMSRLVPHLCKVAPSTPKYHMEDVHRAGGVMGILGELDRTGLLHTDVFHVAADNDGTPGSGTLKSVLAQYDVMQTQDEKVKHFFMAGPAGIPTTKAFSQDCRWPSLDNDRQEGCIRSREFAFSQEGGLAVLSGNVAENGCIVKTAGVDESNLTFVGSARVYESQDDAVAGILGGEVVAGDVVVIRYEGPKGGPGMQEMLYPTSYLKSRGLGKACALITDGRFSGGTSGLSIGHVSPEAAAGGTIALIENGDRIEIDIPKRSIKLAVSDVELNARREKMHSLGPMAWKPIGRQRYVSLALKAYAMLATSADKGAVRDRSKLED.

Position 81 (Asp-81) interacts with Mg(2+). Cys-122 contributes to the [2Fe-2S] cluster binding site. Mg(2+) is bound by residues Asp-123 and Lys-124. At Lys-124 the chain carries N6-carboxylysine. Residue Cys-195 coordinates [2Fe-2S] cluster. Glu-499 is a binding site for Mg(2+). Residue Ser-525 is the Proton acceptor of the active site.

It belongs to the IlvD/Edd family. Homodimer. Requires [2Fe-2S] cluster as cofactor. It depends on Mg(2+) as a cofactor.

It carries out the reaction (2R)-2,3-dihydroxy-3-methylbutanoate = 3-methyl-2-oxobutanoate + H2O. The enzyme catalyses (2R,3R)-2,3-dihydroxy-3-methylpentanoate = (S)-3-methyl-2-oxopentanoate + H2O. It functions in the pathway amino-acid biosynthesis; L-isoleucine biosynthesis; L-isoleucine from 2-oxobutanoate: step 3/4. The protein operates within amino-acid biosynthesis; L-valine biosynthesis; L-valine from pyruvate: step 3/4. In terms of biological role, functions in the biosynthesis of branched-chain amino acids. Catalyzes the dehydration of (2R,3R)-2,3-dihydroxy-3-methylpentanoate (2,3-dihydroxy-3-methylvalerate) into 2-oxo-3-methylpentanoate (2-oxo-3-methylvalerate) and of (2R)-2,3-dihydroxy-3-methylbutanoate (2,3-dihydroxyisovalerate) into 2-oxo-3-methylbutanoate (2-oxoisovalerate), the penultimate precursor to L-isoleucine and L-valine, respectively. The sequence is that of Dihydroxy-acid dehydratase from Shewanella baltica (strain OS155 / ATCC BAA-1091).